The chain runs to 255 residues: Protein PH0439 (255 aa).

Belongs to the CinA family.

This chain is Protein PH0439, found in Pyrococcus horikoshii (strain ATCC 700860 / DSM 12428 / JCM 9974 / NBRC 100139 / OT-3).